The following is a 736-amino-acid chain: Death domain-associated protein 6 (736 aa).

Positions 1 to 55 (MATANSIIVLDDDDENEAAAQPGPSHPLPSTASPEAEAPSSSEPHGARGSSSSGG) are disordered. The tract at residues 1–160 (MATANSIIVL…TSNEPSGNNP (160 aa)) is necessary for interaction with USP7 and ATRX. S25 is modified (phosphoserine). Low complexity predominate over residues 28-55 (LPSTASPEAEAPSSSEPHGARGSSSSGG). A Glycyl lysine isopeptide (Lys-Gly) (interchain with G-Cter in SUMO2) cross-link involves residue K142. The disordered stretch occupies residues 148-185 (VATTSNEPSGNNPPTHLSLDPTNAENTASQAPRTRGSR). Over residues 149–179 (ATTSNEPSGNNPPTHLSLDPTNAENTASQAP) the composition is skewed to polar residues. Residues 180–216 (RTRGSRRQIQRLEQLLALYVAEIRRLQERELDLSELD) adopt a coiled-coil conformation. An interaction with histone H3.3 region spans residues 183 to 417 (GSRRQIQRLE…PPEPSLDSGE (235 aa)). Position 213 is a phosphoserine (S213). The interval 347-566 (GVDPALSYPV…SPVSQLFELE (220 aa)) is necessary for interaction with USP7. The segment at 387-558 (EEGKKKKRRA…EELTLEEESP (172 aa)) is disordered. The Nuclear localization signal signature appears at 391–395 (KKKRR). Phosphoserine occurs at positions 412 and 424. The stretch at 430-490 (ASRAETDDED…EEEEEAAGKD (61 aa)) forms a coiled coil. Positions 435–485 (TDDEDDEESDEEEEEEEEEEEEEATDFEEEEDLEQMQEGQEDDEEEEEEEE) are enriched in acidic residues. At T459 the chain carries Phosphothreonine. A phosphoserine mark is found at S494 and S497. The segment covering 495 to 504 (PMSSPQISTE) has biased composition (polar residues). K511 carries the post-translational modification N6-acetyllysine. A compositionally biased stretch (polar residues) spans 513–524 (ISRSSGEQQNKV). Positions 525–538 (SPLLLSEEPLAPSS) are enriched in low complexity. Positions 547-557 (QPEELTLEEES) are enriched in acidic residues. Residues S557 and S576 each carry the phosphoserine modification. The tract at residues 602-736 (GMVSSTSFNG…EEIIVLSDSD (135 aa)) is disordered. The interaction with SPOP stretch occupies residues 622–736 (GPPCKKSRKE…EEIIVLSDSD (115 aa)). The Nuclear localization signal signature appears at 624–630 (PCKKSRK). Residues K626 and K627 each participate in a glycyl lysine isopeptide (Lys-Gly) (interchain with G-Cter in SUMO1) cross-link. The span at 646–656 (ERQRSVHEKNG) shows a compositional bias: basic and acidic residues. Residues S664 and S667 each carry the phosphoserine modification. The segment covering 669–679 (LASLAPVADSS) has biased composition (low complexity). S684, S698, S733, and S735 each carry phosphoserine. Low complexity predominate over residues 697–707 (PSPAQLSQTPQ). Residues 729-736 (IIVLSDSD) form a sumo interaction motif (SIM) region.

It belongs to the DAXX family. In terms of assembly, homomultimer. Interacts (via C-terminus) with TNFRSF6 (via death domain). Interacts with PAX5, SLC2A4/GLUT4, MAP3K5, TGFBR2, phosphorylated dimeric HSPB1/HSP27, CENPC, ETS1, sumoylated PML, UBE2I, MCRS1 and TP53. Interacts (via N-terminus) with HIPK2 and HIPK3. Interacts with HIPK1, which induces translocation from PML/POD/ND10 nuclear bodies to chromatin and enhances association with HDAC1. Interacts (non-phosphorylated) with PAX3, PAX7, DEK, HDAC1, HDAC2, HDAC3, acetylated histone H4 and histones H2A, H2B, H3, H3.3 and H4. Interacts with SPOP; mediating CUL3-dependent proteasomal degradation. Interacts with CBP; the interaction is dependent the sumoylation of CBP and suppresses CBP transcriptional activity via recruitment of HDAC2 directly in the complex with TP53 and HIPK2. Interacts with AXIN1; the interaction stimulates the interaction of DAXX with TP53, stimulates 'Ser-46' phosphorylation of TP53 on and induces cell death on UV irradiation. Interacts with MDM2; the interaction is direct. Interacts with USP7; the interaction is direct and independent of MDM2 and TP53. Part of a complex with DAXX, MDM2 and USP7 under non-stress conditions. Interacts (via N-terminus) with RASSF1 (via C-terminus); the interaction is independent of MDM2 and TP53; RASSF1 isoform A disrupts interactions among MDM2, DAXX and USP7, thus contributing to the efficient activation of TP53 by promoting MDM2 self-ubiquitination in cell-cycle checkpoint control in response to DNA damage. Interacts with ATRX to form the chromatin remodeling complex ATRX:DAXX. Post-translationally, sumoylated with SUMO1 on multiple lysine residues. In terms of processing, polyubiquitinated; which is promoted by CUL3 and SPOP and results in proteasomal degradation. Ubiquitinated by MDM2; inducing its degradation. Deubiquitinated by USP7; leading to stabilize it.

It is found in the cytoplasm. Its subcellular location is the nucleus. The protein localises to the nucleoplasm. The protein resides in the PML body. It localises to the nucleolus. It is found in the chromosome. Its subcellular location is the centromere. Functionally, transcription corepressor known to repress transcriptional potential of several sumoylated transcription factors. Down-regulates basal and activated transcription. Its transcription repressor activity is modulated by recruiting it to subnuclear compartments like the nucleolus or PML/POD/ND10 nuclear bodies through interactions with MCSR1 and PML, respectively. Seems to regulate transcription in PML/POD/ND10 nuclear bodies together with PML and may influence TNFRSF6-dependent apoptosis thereby. Inhibits transcriptional activation of PAX3 and ETS1 through direct protein-protein interactions. Modulates PAX5 activity; the function seems to involve CREBBP. Acts as an adapter protein in a MDM2-DAXX-USP7 complex by regulating the RING-finger E3 ligase MDM2 ubiquitination activity. Under non-stress condition, in association with the deubiquitinating USP7, prevents MDM2 self-ubiquitination and enhances the intrinsic E3 ligase activity of MDM2 towards TP53, thereby promoting TP53 ubiquitination and subsequent proteasomal degradation. Upon DNA damage, its association with MDM2 and USP7 is disrupted, resulting in increased MDM2 autoubiquitination and consequently, MDM2 degradation, which leads to TP53 stabilization. Acts as a histone chaperone that facilitates deposition of histone H3.3. Acts as a targeting component of the chromatin remodeling complex ATRX:DAXX which has ATP-dependent DNA translocase activity and catalyzes the replication-independent deposition of histone H3.3 in pericentric DNA repeats outside S-phase and telomeres, and the in vitro remodeling of H3.3-containing nucleosomes. Does not affect the ATPase activity of ATRX but alleviates its transcription repression activity. Upon neuronal activation associates with regulatory elements of selected immediate early genes where it promotes deposition of histone H3.3 which may be linked to transcriptional induction of these genes. Required for the recruitment of histone H3.3:H4 dimers to PML-nuclear bodies (PML-NBs); the process is independent of ATRX and facilitated by ASF1A; PML-NBs are suggested to function as regulatory sites for the incorporation of newly synthesized histone H3.3 into chromatin. Proposed to mediate activation of the JNK pathway and apoptosis via MAP3K5 in response to signaling from TNFRSF6 and TGFBR2. Interaction with HSPB1/HSP27 may prevent interaction with TNFRSF6 and MAP3K5 and block DAXX-mediated apoptosis. In contrast, in lymphoid cells JNC activation and TNFRSF6-mediated apoptosis may not involve DAXX. The protein is Death domain-associated protein 6 (DAXX) of Chlorocebus aethiops (Green monkey).